Consider the following 1221-residue polypeptide: A disintegrin and metalloproteinase with thrombospondin motifs 18 (1221 aa).

The signal sequence occupies residues 1-47 (MECALLLACAFPAAGSGPPRGLAGLGRVAKALQLCCLCCASVAAALA). Positions 48 to 284 (SDSSSGASGL…EYGSSGRPRR (237 aa)) are excised as a propeptide. 2 N-linked (GlcNAc...) asparagine glycosylation sites follow: N151 and N190. A Cysteine switch motif is present at residues 252 to 259 (HFCGRRKK). C254 serves as a coordination point for Zn(2+). Residues 258 to 291 (KKYAPKPPTEDTYLRFDEYGSSGRPRRSAGKSQK) are disordered. A compositionally biased stretch (basic and acidic residues) spans 265-275 (PTEDTYLRFDE). The region spanning 293–498 (LNVETLVVAD…PQAGCLVDEP (206 aa)) is the Peptidase M12B domain. N313 carries an N-linked (GlcNAc...) asparagine glycan. Intrachain disulfides connect C369/C420, C395/C402, C414/C493, C453/C477, C521/C546, C532/C553, C541/C572, C566/C577, C601/C638, C605/C643, and C616/C628. Zn(2+) is bound at residue H436. E437 is a catalytic residue. Residues H440 and H446 each coordinate Zn(2+). Residues 498 to 577 (PKQAGQYKYP…LSMWCRQGQC (80 aa)) enclose the Disintegrin domain. Residues 589 to 644 (HGQWSAWSKWSECSRTCGGGVKFQERHCNNPKPQYGGLFCPGSSRIYQLCNINPCN) enclose the TSP type-1 1 domain. 3 N-linked (GlcNAc...) asparagine glycosylation sites follow: N745, N838, and N909. Residues 750–876 (FYKGLYLNQH…TPPATKRPAY (127 aa)) form a spacer region. TSP type-1 domains follow at residues 931-990 (CPAY…NSHA), 991-1049 (CPPQ…GRCP), 1052-1116 (SRLQ…RACP), and 1123-1178 (MVAG…NFCP). A PLAC domain is found at 1184–1221 (EDPSCVDFFNWCHLVPQHGVCNHKFYGKQCCKSCTRKI).

Requires Zn(2+) as cofactor. The precursor is cleaved by a furin endopeptidase. Post-translationally, glycosylated. Can be O-fucosylated by POFUT2 on a serine or a threonine residue found within the consensus sequence C1-X(2)-(S/T)-C2-G of the TSP type-1 repeat domains where C1 and C2 are the first and second cysteine residue of the repeat, respectively. Fucosylated repeats can then be further glycosylated by the addition of a beta-1,3-glucose residue by the glucosyltransferase, B3GALTL. Fucosylation mediates the efficient secretion of ADAMTS family members. Can also be C-glycosylated with one or two mannose molecules on tryptophan residues within the consensus sequence W-X-X-W of the TPRs, and N-glycosylated. These other glycosylations can also facilitate secretion. In terms of tissue distribution, expressed in fetal lung, liver, and kidney and in adult brain, prostate, submaxillary gland, and endothelium.

The protein localises to the secreted. The protein resides in the extracellular space. Its subcellular location is the extracellular matrix. The chain is A disintegrin and metalloproteinase with thrombospondin motifs 18 (ADAMTS18) from Homo sapiens (Human).